The following is a 99-amino-acid chain: NADH-quinone oxidoreductase subunit K 1 (99 aa).

A run of 3 helical transmembrane segments spans residues 3–23 (PVNY…GVLV), 28–48 (IVVF…LVTF), and 59–79 (IVAF…LAII).

It belongs to the complex I subunit 4L family. NDH-1 is composed of 14 different subunits. Subunits NuoA, H, J, K, L, M, N constitute the membrane sector of the complex.

Its subcellular location is the cell membrane. The enzyme catalyses a quinone + NADH + 5 H(+)(in) = a quinol + NAD(+) + 4 H(+)(out). Its function is as follows. NDH-1 shuttles electrons from NADH, via FMN and iron-sulfur (Fe-S) centers, to quinones in the respiratory chain. The immediate electron acceptor for the enzyme in this species is believed to be a menaquinone. Couples the redox reaction to proton translocation (for every two electrons transferred, four hydrogen ions are translocated across the cytoplasmic membrane), and thus conserves the redox energy in a proton gradient. The sequence is that of NADH-quinone oxidoreductase subunit K 1 from Streptomyces griseus subsp. griseus (strain JCM 4626 / CBS 651.72 / NBRC 13350 / KCC S-0626 / ISP 5235).